The sequence spans 182 residues: Large ribosomal subunit protein uL22 (182 aa).

The disordered stretch occupies residues 159-182 (AAAKPKATAKKATGEKSKAKTKAN).

Belongs to the universal ribosomal protein uL22 family. As to quaternary structure, part of the 50S ribosomal subunit.

Its function is as follows. This protein binds specifically to 23S rRNA; its binding is stimulated by other ribosomal proteins, e.g. L4, L17, and L20. It is important during the early stages of 50S assembly. It makes multiple contacts with different domains of the 23S rRNA in the assembled 50S subunit and ribosome. Functionally, the globular domain of the protein is located near the polypeptide exit tunnel on the outside of the subunit, while an extended beta-hairpin is found that lines the wall of the exit tunnel in the center of the 70S ribosome. In Cytophaga hutchinsonii (strain ATCC 33406 / DSM 1761 / CIP 103989 / NBRC 15051 / NCIMB 9469 / D465), this protein is Large ribosomal subunit protein uL22.